The sequence spans 85 residues: Actobindin homolog (85 aa).

The WH2 domain occupies 35–52 (DRNELLSGIKEGKELKKA).

Is able to bind two actin monomers at high concentrations of G-actin. The polypeptide is Actobindin homolog (Entamoeba histolytica).